The primary structure comprises 363 residues: 2,5-diketocamphane 1,2-monooxygenase 1 (363 aa).

Residues Met-74 and 186–194 (TGLTKNSSS) contribute to the FMN site.

Belongs to the bacterial luciferase oxidoreductase family. Homodimer. Likely forms a loose transient complex with a P.putida flavin reductase that provides the required FMNH(2) to the enzyme.

The catalysed reaction is (1R,4R)-bornane-2,5-dione + FMNH2 + O2 = (1R,4R)-5-oxo-1,2-campholide + FMN + H2O + H(+). The protein operates within terpene metabolism; (R)-camphor degradation. In terms of biological role, involved in the degradation and assimilation of (+)-camphor, which allows P.putida strain NCIMB 10007 to grow on this enantiomer of camphor as the sole carbon source. Catalyzes the FMNH(2)-dependent lactonization of 2,5-diketocamphane via a Baeyer-Villiger oxidation to produce the unstable lactone 5-oxo-1,2-campholide with (R,R) configuration, that presumably undergoes spontaneous hydrolysis to form 2-oxo-Delta(3)-4,5,5-trimethylcyclopentenylacetate. Is also able to convert (+)-camphor and norcamphor to the corresponding lactone in vitro. Shows no conversion of (-)-camphor, (+)-fenchone, (-)-fenchone, and (+)-nopinone. Acts only on bicyclic ketones; is not active towards monocyclic ketones, aromatic ketones, the aliphatic 2-decanone, 1-indanone and progesterone. This Pseudomonas putida (Arthrobacter siderocapsulatus) protein is 2,5-diketocamphane 1,2-monooxygenase 1.